The sequence spans 343 residues: Tetraacyldisaccharide 4'-kinase (343 aa).

55–62 (TVGGEGKT) is an ATP binding site.

This sequence belongs to the LpxK family.

It catalyses the reaction a lipid A disaccharide + ATP = a lipid IVA + ADP + H(+). It participates in glycolipid biosynthesis; lipid IV(A) biosynthesis; lipid IV(A) from (3R)-3-hydroxytetradecanoyl-[acyl-carrier-protein] and UDP-N-acetyl-alpha-D-glucosamine: step 6/6. Its function is as follows. Transfers the gamma-phosphate of ATP to the 4'-position of a tetraacyldisaccharide 1-phosphate intermediate (termed DS-1-P) to form tetraacyldisaccharide 1,4'-bis-phosphate (lipid IVA). The chain is Tetraacyldisaccharide 4'-kinase from Chelativorans sp. (strain BNC1).